The chain runs to 433 residues: Probable glycine dehydrogenase (decarboxylating) subunit 1 (433 aa).

This sequence belongs to the GcvP family. N-terminal subunit subfamily. In terms of assembly, the glycine cleavage system is composed of four proteins: P, T, L and H. In this organism, the P 'protein' is a heterodimer of two subunits.

The catalysed reaction is N(6)-[(R)-lipoyl]-L-lysyl-[glycine-cleavage complex H protein] + glycine + H(+) = N(6)-[(R)-S(8)-aminomethyldihydrolipoyl]-L-lysyl-[glycine-cleavage complex H protein] + CO2. Its function is as follows. The glycine cleavage system catalyzes the degradation of glycine. The P protein binds the alpha-amino group of glycine through its pyridoxal phosphate cofactor; CO(2) is released and the remaining methylamine moiety is then transferred to the lipoamide cofactor of the H protein. This is Probable glycine dehydrogenase (decarboxylating) subunit 1 from Thermoplasma acidophilum (strain ATCC 25905 / DSM 1728 / JCM 9062 / NBRC 15155 / AMRC-C165).